The following is a 265-amino-acid chain: Protein Pars_0096 (265 aa).

The protein belongs to the CinA family.

This Pyrobaculum arsenaticum (strain DSM 13514 / JCM 11321 / PZ6) protein is Protein Pars_0096.